The primary structure comprises 206 residues: Elongation factor 1-beta (206 aa).

N-acetylalanine is present on Ala-2. Lys-13 participates in a covalent cross-link: Glycyl lysine isopeptide (Lys-Gly) (interchain with G-Cter in ubiquitin). 2 positions are modified to phosphoserine: Ser-31 and Ser-86.

It belongs to the EF-1-beta/EF-1-delta family. In terms of assembly, the eukaryotic elongation factor 1 complex (eEF1) is probably a heterohexamer. Two trimeric complexes, each composed of eEF1A (TEF1 or TEF2), eEF1Balpha (EFB1) and eEF1Bgamma (CAM1 or TEF4), are probably dimerized via the eF1Bgamma subunits. eEF1Balpha interacts directly with eEF1A. eEF1Balpha and eEF1Bgamma form the eEF1B subcomplex with the GEF activity. S-thiolated in response to oxidative stress, probably inhibiting the protein and causing a reduction in protein synthesis.

It participates in protein biosynthesis; polypeptide chain elongation. Catalytic subunit of the guanine nucleotide exchange factor (GEF) (eEF1B subcomplex) of the eukaryotic elongation factor 1 complex (eEF1). Stimulates the exchange of GDP for GTP on elongation factor 1A (eEF1A), probably by displacing GDP from the nucleotide binding pocket in eEF1A. The 30-fold higher concentration of GTP compared to GDP in cells favors the formation of eEF1A-GTP, which rapidly forms a ternary complex with aminoacyl-tRNA that in turn displaces eEF1B from the complex. The sequence is that of Elongation factor 1-beta (EFB1) from Saccharomyces cerevisiae (strain ATCC 204508 / S288c) (Baker's yeast).